The chain runs to 123 residues: Late histone H2B.L3 (123 aa).

The segment covering 1–10 (MPAKAQAAGK) has biased composition (low complexity). A disordered region spans residues 1-32 (MPAKAQAAGKKGSKKAKAPKPSGDKKRRRKRK). Residue Ser-110 is glycosylated (O-linked (GlcNAc) serine). A Glycyl lysine isopeptide (Lys-Gly) (interchain with G-Cter in ubiquitin) cross-link involves residue Lys-118.

It belongs to the histone H2B family. The nucleosome is a histone octamer containing two molecules each of H2A, H2B, H3 and H4 assembled in one H3-H4 heterotetramer and two H2A-H2B heterodimers. The octamer wraps approximately 147 bp of DNA. Monoubiquitination of Lys-118 gives a specific tag for epigenetic transcriptional activation and is also prerequisite for histone H3 'Lys-4' and 'Lys-79' methylation. In terms of processing, glcNAcylation at Ser-110 promotes monoubiquitination of Lys-118. It fluctuates in response to extracellular glucose, and associates with transcribed genes.

The protein localises to the nucleus. It localises to the chromosome. Functionally, core component of nucleosome. Nucleosomes wrap and compact DNA into chromatin, limiting DNA accessibility to the cellular machineries which require DNA as a template. Histones thereby play a central role in transcription regulation, DNA repair, DNA replication and chromosomal stability. DNA accessibility is regulated via a complex set of post-translational modifications of histones, also called histone code, and nucleosome remodeling. This chain is Late histone H2B.L3, found in Strongylocentrotus purpuratus (Purple sea urchin).